The primary structure comprises 124 residues: Non-structural protein 2 (124 aa).

The short motif at 121–124 (DLNP) is the DLNP; interaction with MAP1B element.

This sequence belongs to the pneumovirus non-structural protein 2 family. In terms of assembly, monomer (instable). Homomultimer. Heteromultimer with NS1. Interacts with host RIGI (via N-terminus); this interaction prevents host signaling pathway involved in interferon production. Interacts with host MAP1B/microtubule-associated protein 1B.

The protein localises to the host mitochondrion. Plays a major role in antagonizing the type I IFN-mediated antiviral response. Acts cooperatively with NS1 to repress activation and nuclear translocation of host IFN-regulatory factor IRF3. Interacts with the host cytoplasmic sensor of viral nucleic acids RIGI and prevents the interaction with its downstream partner MAVS. Together with NS2, participates in the proteasomal degradation of host STAT2, IRF3, IRF7, TBK1 and RIGI through a NS-degradasome involving CUL2 and Elongin-C. The degradasome requires an intact mitochondrial MAVS. Induces host SOCS1 expression. Induces activation of NF-kappa-B. Suppresses premature apoptosis by an NF-kappa-B-dependent, interferon-independent mechanism promoting continued viral replication. The chain is Non-structural protein 2 (1B) from Ovine respiratory syncytial virus (strain WSU 83-1578) (ORSV).